We begin with the raw amino-acid sequence, 419 residues long: Serine hydroxymethyltransferase (419 aa).

(6S)-5,6,7,8-tetrahydrofolate is bound by residues leucine 121 and 125 to 127 (GHL). Residue lysine 229 is modified to N6-(pyridoxal phosphate)lysine. 354–356 (SPF) provides a ligand contact to (6S)-5,6,7,8-tetrahydrofolate.

This sequence belongs to the SHMT family. In terms of assembly, homodimer. It depends on pyridoxal 5'-phosphate as a cofactor.

It localises to the cytoplasm. It catalyses the reaction (6R)-5,10-methylene-5,6,7,8-tetrahydrofolate + glycine + H2O = (6S)-5,6,7,8-tetrahydrofolate + L-serine. Its pathway is one-carbon metabolism; tetrahydrofolate interconversion. It participates in amino-acid biosynthesis; glycine biosynthesis; glycine from L-serine: step 1/1. Catalyzes the reversible interconversion of serine and glycine with tetrahydrofolate (THF) serving as the one-carbon carrier. This reaction serves as the major source of one-carbon groups required for the biosynthesis of purines, thymidylate, methionine, and other important biomolecules. Also exhibits THF-independent aldolase activity toward beta-hydroxyamino acids, producing glycine and aldehydes, via a retro-aldol mechanism. This Coxiella burnetii (strain RSA 331 / Henzerling II) protein is Serine hydroxymethyltransferase.